Consider the following 433-residue polypeptide: GTPase Der (433 aa).

EngA-type G domains follow at residues 3–167 and 175–349; these read KIVS…DKNI and PRIA…FNLR. Residues 9-16, 56-60, 119-122, 181-188, 228-232, and 293-296 contribute to the GTP site; these read GRPNVGKS, DTGGY, NKID, DTAGI, and NKWD. A KH-like domain is found at 350–433; sequence LRIKTSLLNK…IPIKILFRLK (84 aa).

It belongs to the TRAFAC class TrmE-Era-EngA-EngB-Septin-like GTPase superfamily. EngA (Der) GTPase family. In terms of assembly, associates with the 50S ribosomal subunit.

Its function is as follows. GTPase that plays an essential role in the late steps of ribosome biogenesis. The chain is GTPase Der from Karelsulcia muelleri (strain GWSS) (Sulcia muelleri).